The sequence spans 120 residues: Large ribosomal subunit protein uL14 (120 aa).

This sequence belongs to the universal ribosomal protein uL14 family. In terms of assembly, part of the 50S ribosomal subunit. Forms a cluster with proteins L3 and L19. In the 70S ribosome, L14 and L19 interact and together make contacts with the 16S rRNA in bridges B5 and B8.

In terms of biological role, binds to 23S rRNA. Forms part of two intersubunit bridges in the 70S ribosome. The sequence is that of Large ribosomal subunit protein uL14 from Phytoplasma australiense.